We begin with the raw amino-acid sequence, 799 residues long: Protein translocase subunit SecA 1 (799 aa).

Residues Gln-85, 103 to 107 (GEGKT), and Asp-504 each bind ATP.

Belongs to the SecA family. In terms of assembly, monomer and homodimer. Part of the essential Sec protein translocation apparatus which comprises SecA, SecYEG and auxiliary proteins SecDF. Other proteins may also be involved.

It localises to the cell membrane. Its subcellular location is the cytoplasm. The catalysed reaction is ATP + H2O + cellular proteinSide 1 = ADP + phosphate + cellular proteinSide 2.. Part of the Sec protein translocase complex. Interacts with the SecYEG preprotein conducting channel. Has a central role in coupling the hydrolysis of ATP to the transfer of proteins into and across the cell membrane, serving as an ATP-driven molecular motor driving the stepwise translocation of polypeptide chains across the membrane. In Lactobacillus johnsonii (strain CNCM I-12250 / La1 / NCC 533), this protein is Protein translocase subunit SecA 1.